The primary structure comprises 197 residues: 3-isopropylmalate dehydratase small subunit (197 aa).

Belongs to the LeuD family. LeuD type 1 subfamily. As to quaternary structure, heterodimer of LeuC and LeuD.

The catalysed reaction is (2R,3S)-3-isopropylmalate = (2S)-2-isopropylmalate. It functions in the pathway amino-acid biosynthesis; L-leucine biosynthesis; L-leucine from 3-methyl-2-oxobutanoate: step 2/4. In terms of biological role, catalyzes the isomerization between 2-isopropylmalate and 3-isopropylmalate, via the formation of 2-isopropylmaleate. This chain is 3-isopropylmalate dehydratase small subunit, found in Geobacillus sp. (strain WCH70).